Reading from the N-terminus, the 807-residue chain is Glycerol-3-phosphate acyltransferase (807 aa).

The HXXXXD motif signature appears at 305–310 (CHRSHM).

The protein belongs to the GPAT/DAPAT family.

It is found in the cell inner membrane. It catalyses the reaction sn-glycerol 3-phosphate + an acyl-CoA = a 1-acyl-sn-glycero-3-phosphate + CoA. It participates in phospholipid metabolism; CDP-diacylglycerol biosynthesis; CDP-diacylglycerol from sn-glycerol 3-phosphate: step 1/3. The polypeptide is Glycerol-3-phosphate acyltransferase (Aliivibrio salmonicida (strain LFI1238) (Vibrio salmonicida (strain LFI1238))).